Reading from the N-terminus, the 795-residue chain is Protein ROOT HAIR DEFECTIVE 3 homolog 1 (795 aa).

Residues 1–682 lie on the Cytoplasmic side of the membrane; the sequence is MDADKSEGCC…EANRRGNNWL (682 aa). The GB1/RHD3-type G domain occupies 39–254; sequence GLSYAVVSIM…IAPGGLAGDR (216 aa). Residue 49 to 56 coordinates GTP; sequence GPQSSGKS. The stretch at 218-244 forms a coiled coil; sequence VALSSYEEKEEQFKEQIASLRQRFMHS. The chain crosses the membrane as a helical span at residues 683 to 703; that stretch reads PPPWAILALIVLGFNEFMTLL. The Lumenal portion of the chain corresponds to 704–706; sequence RNP. The chain crosses the membrane as a helical span at residues 707 to 727; the sequence is LYLGVMFVAFLLAKALWTQLD. Residues 728–795 lie on the Cytoplasmic side of the membrane; the sequence is IPGEFRNGAL…PDHKSSSKED (68 aa). Residues 761–795 are disordered; the sequence is QGEDPPAANPENRRSSNNTSSSENPPDHKSSSKED. Residues 775–784 show a composition bias toward low complexity; sequence SSNNTSSSEN. Basic and acidic residues predominate over residues 785–795; the sequence is PPDHKSSSKED.

Belongs to the TRAFAC class dynamin-like GTPase superfamily. GB1/RHD3 GTPase family. RHD3 subfamily. As to expression, specifically expressed in flowers.

Its subcellular location is the endoplasmic reticulum membrane. Functionally, probable GTP-binding protein that may be involved in cell development. This is Protein ROOT HAIR DEFECTIVE 3 homolog 1 from Arabidopsis thaliana (Mouse-ear cress).